We begin with the raw amino-acid sequence, 351 residues long: Cell division protein FtsZ (351 aa).

GTP contacts are provided by residues 31–35, 118–120, glutamate 149, arginine 153, and aspartate 197; these read GAGNN and GTG.

Belongs to the FtsZ family. Homodimer. Polymerizes to form a dynamic ring structure in a strictly GTP-dependent manner. Interacts directly with several other division proteins. Interacts with FtsA.

The protein resides in the cytoplasm. Its function is as follows. Essential cell division protein that forms a contractile ring structure (Z ring) at the future cell division site. The regulation of the ring assembly controls the timing and the location of cell division. One of the functions of the FtsZ ring is to recruit other cell division proteins to the septum to produce a new cell wall between the dividing cells. Binds GTP and shows GTPase activity. This chain is Cell division protein FtsZ, found in Thermotoga maritima (strain ATCC 43589 / DSM 3109 / JCM 10099 / NBRC 100826 / MSB8).